Consider the following 751-residue polypeptide: Photosystem I P700 chlorophyll a apoprotein A1 (751 aa).

The next 8 helical transmembrane spans lie at 73 to 96 (VFSAHFGQLGIILIWLSGMYFHGA), 159 to 182 (LYTTAVVGLVLAGAMFFAGWFHYH), 198 to 222 (LNHHLGGLLGLGSLGWAGHQIHVSL), 294 to 312 (TAHHHLAIAVLFLIAGHMY), 349 to 372 (WHAQLAINLALFGSLSIVVAHHMY), 388 to 414 (LSLFTHHCWIGGFCIVGAGAHAAIFMV), 436 to 458 (AIISHLNWVSIFLGFHSFGLYIH), and 533 to 551 (FMVHHIHAFTIHVTVLILL). 2 residues coordinate [4Fe-4S] cluster: Cys-575 and Cys-584. 2 helical membrane passes run 591 to 612 (HVFLGLFWMYNSLSIVIFHFSW) and 665 to 687 (LSAYGLIFLGAHFILLTGMLDIF). Position 676 (His-676) interacts with chlorophyll a'. Chlorophyll a contacts are provided by Met-683 and Tyr-692. A phylloquinone-binding site is contributed by Trp-693. The chain crosses the membrane as a helical span at residues 725–745 (AVGVAHYLLGGIATTWSFFLA).

It belongs to the PsaA/PsaB family. As to quaternary structure, the PsaA/B heterodimer binds the P700 chlorophyll special pair and subsequent electron acceptors. PSI consists of a core antenna complex that captures photons, and an electron transfer chain that converts photonic excitation into a charge separation. The eukaryotic PSI reaction center is composed of at least 11 subunits. P700 is a chlorophyll a/chlorophyll a' dimer, A0 is one or more chlorophyll a, A1 is one or both phylloquinones and FX is a shared 4Fe-4S iron-sulfur center. serves as cofactor.

It is found in the plastid. The protein resides in the chloroplast thylakoid membrane. It catalyses the reaction reduced [plastocyanin] + hnu + oxidized [2Fe-2S]-[ferredoxin] = oxidized [plastocyanin] + reduced [2Fe-2S]-[ferredoxin]. Its function is as follows. PsaA and PsaB bind P700, the primary electron donor of photosystem I (PSI), as well as the electron acceptors A0, A1 and FX. PSI is a plastocyanin/cytochrome c6-ferredoxin oxidoreductase, converting photonic excitation into a charge separation, which transfers an electron from the donor P700 chlorophyll pair to the spectroscopically characterized acceptors A0, A1, FX, FA and FB in turn. Oxidized P700 is reduced on the lumenal side of the thylakoid membrane by plastocyanin or cytochrome c6. The sequence is that of Photosystem I P700 chlorophyll a apoprotein A1 from Stigeoclonium helveticum (Green alga).